Here is a 128-residue protein sequence, read N- to C-terminus: Large ribosomal subunit protein bL19 (128 aa).

This sequence belongs to the bacterial ribosomal protein bL19 family.

Functionally, this protein is located at the 30S-50S ribosomal subunit interface and may play a role in the structure and function of the aminoacyl-tRNA binding site. This chain is Large ribosomal subunit protein bL19, found in Paracidovorax citrulli (strain AAC00-1) (Acidovorax citrulli).